We begin with the raw amino-acid sequence, 517 residues long: Transcription factor MTB3 (517 aa).

The interval 290 to 331 (GNSSNGYRSDEGEGKLYKEELDERKPRKRGRKPANGREEALN) is disordered. Over residues 297–314 (RSDEGEGKLYKEELDERK) the composition is skewed to basic and acidic residues. Residues 327–340 (EEALNHVEAERQRR) form a basic motif; degenerate region. In terms of domain architecture, bHLH spans 327–376 (EEALNHVEAERQRREKLNQRFYALRAVVPNISKMDKASLLGDAIAYITDL). The interval 341 to 376 (EKLNQRFYALRAVVPNISKMDKASLLGDAIAYITDL) is helix-loop-helix motif.

The protein localises to the nucleus. Transcription factor that negatively regulates jasmonate (JA) signaling. Negatively regulates JA-dependent response to wounding, JA-induced expression of defense genes, JA-dependent responses against herbivorous insects, and JA-dependent resistance against Botrytis cinerea infection. Plays a positive role in resistance against the bacterial pathogen Pseudomonas syringae pv tomato DC3000. This is Transcription factor MTB3 from Solanum lycopersicum (Tomato).